The primary structure comprises 263 residues: METLLHSEILKKYKEETNEYIKKKNVEKLFDIILKNVLINKPDNIYLYIYNNIYSFLLNKIFIMGPPVLKITSMLSSHISEFFNYYHISLPILIQQYKLNKGESSNNKIIVNDEIISFILKENIHNLDSKKKKGYIVEGYPNNNLQAYSCLKYLPSHVFVLYADEEYIYKKYEEENDIAIFSYTQKKDYDINEPHEINNIDVKPLKDQVLSYIRNISDMLTILGTNKKVLNLHDFNDQMLIDHVKNEVSKNKDEWDSTLNGDI.

This sequence belongs to the adenylate kinase family.

It is found in the cytoplasm. In terms of biological role, lacks adenylate kinase activity. This Plasmodium falciparum (isolate 3D7) protein is Inactive adenylate kinase.